Here is a 586-residue protein sequence, read N- to C-terminus: Nucleus accumbens-associated protein 2 (586 aa).

The BTB domain maps to 30-94 (CDVSIVVKGQ…CYTGKLTMAA (65 aa)). Lys171 participates in a covalent cross-link: Glycyl lysine isopeptide (Lys-Gly) (interchain with G-Cter in SUMO2). Positions 177-196 (MPPASGPGLASKRPLETGPR) are disordered. Residue Lys215 forms a Glycyl lysine isopeptide (Lys-Gly) (interchain with G-Cter in SUMO2) linkage. A disordered region spans residues 236-272 (QVPYPPGERTSPGASSLPTTDSPTSYHNEEDEEDDEA). Polar residues predominate over residues 247–261 (PGASSLPTTDSPTSY). Glycyl lysine isopeptide (Lys-Gly) (interchain with G-Cter in SUMO2) cross-links involve residues Lys297, Lys427, and Lys454. The 98-residue stretch at 349–446 (GSGVYITRGQ…DMCTNARRVR (98 aa)) folds into the BEN domain. The tract at residues 542 to 586 (APEQLPADGQSSPQAFEQGNTSSSRPQTPVATATRRPEGTYAGTL) is disordered. Over residues 550–572 (GQSSPQAFEQGNTSSSRPQTPVA) the composition is skewed to polar residues.

In terms of assembly, homooligomer; mediated by the BTB domain. Interacts with the NuRD complex. Interacts (via C-terminal part) with HDAC2. Interacts (via BTB domain) with MTA1, MTA2 and MTA3.

It is found in the nucleus. In terms of biological role, functions as a transcriptional repressor through its association with the NuRD complex. Recruits the NuRD complex to the promoter of MDM2, leading to the repression of MDM2 transcription and subsequent stability of p53/TP53. This chain is Nucleus accumbens-associated protein 2 (Nacc2), found in Mus musculus (Mouse).